The chain runs to 296 residues: Farnesyl diphosphate synthase (296 aa).

Positions 46, 49, and 78 each coordinate isopentenyl diphosphate. Mg(2+) is bound by residues Asp85 and Asp91. (2E)-geranyl diphosphate is bound at residue Arg96. Arg97 provides a ligand contact to isopentenyl diphosphate. Positions 182, 183, 220, and 237 each coordinate (2E)-geranyl diphosphate.

The protein belongs to the FPP/GGPP synthase family. It depends on Mg(2+) as a cofactor.

The protein resides in the cytoplasm. It carries out the reaction isopentenyl diphosphate + (2E)-geranyl diphosphate = (2E,6E)-farnesyl diphosphate + diphosphate. The protein is Farnesyl diphosphate synthase (ispA) of Bacillus subtilis (strain 168).